Consider the following 114-residue polypeptide: Protachykinin (114 aa).

Positions 1 to 19 (MKFLLPSIVIFLVLCQVFG) are cleaved as a signal peptide. A propeptide spanning residues 20–55 (EELGPKEDLDYWTGSNQVQDEWLQADPFREIIRRMT) is cleaved from the precursor. A methionine amide mark is found at Met67 and Met91.

Belongs to the tachykinin family. Expressed in all parts of the brain, with robust expression in the olfactory bulbs and tracts, moderate expression in the hypothalamus and posterior brain, and weak expression in the telencephalon-preoptic region and optic tectum-thalamus. Also expressed in nerve fibers, intestine, testes and pituitary gland. Not expressed in the liver or kidneys.

Its subcellular location is the secreted. Its function is as follows. Tachykinins are active peptides which excite neurons, evoke behavioral responses, are potent vasodilators and secretagogues, and contract (directly or indirectly) many smooth muscles. Functionally, substance P produces a voltage-dependent inhibition of calcium current in retinal bipolar cells. It can enhance learning and memory, may regulate social approach and feeding behaviors, and can accelerate the functional recovery in postural balance in response to light after unilateral labyrinthectomy. This Carassius auratus (Goldfish) protein is Protachykinin.